The primary structure comprises 317 residues: Melanocyte-stimulating hormone receptor (317 aa).

Residues 1–37 lie on the Extracellular side of the membrane; the sequence is MPAQGSQRSXLGSLNSTLMATPSLGLAANQSGPQCLE. N-linked (GlcNAc...) asparagine glycans are attached at residues Asn-15 and Asn-29. Residues 38–63 traverse the membrane as a helical segment; it reads VSVPDGLFLCLGLVSLVENMLVVAAI. Residues 64 to 72 lie on the Cytoplasmic side of the membrane; that stretch reads AKNRNLHSP. A helical transmembrane segment spans residues 73–93; it reads MYCFICCLALSDLLVSISNVL. Residues 94–118 are Extracellular-facing; sequence ETAVMLLLEAGALAVGATVVQQLDN. A helical transmembrane segment spans residues 119-140; that stretch reads VIDVLICSSMVSSLCFLGAIAM. The Cytoplasmic segment spans residues 141-163; that stretch reads DRYISIFYALRYHSIVTLSRAQW. A helical transmembrane segment spans residues 164-183; the sequence is ATAAVWAASILSSTLFIAYY. Residues 184–191 lie on the Extracellular side of the membrane; that stretch reads DRTVVLLC. A helical transmembrane segment spans residues 192-211; that stretch reads LVVFFLAMLVLMAVLYAHML. Over 212 to 240 the chain is Cytoplasmic; it reads TQACQHVQGITRLHKRQHLVQQGFGLKGA. The chain crosses the membrane as a helical span at residues 241–266; the sequence is ATLTILLGVFLLCWGPFFLHLTLIAV. Topologically, residues 267–279 are extracellular; that stretch reads CPQHPTCSCVFKN. A helical transmembrane segment spans residues 280-300; sequence FKLFLALIICNAIVDPLIYAF. At 301–317 the chain is on the cytoplasmic side; that stretch reads RSQELRKTLKEVLLFSW.

It belongs to the G-protein coupled receptor 1 family. As to quaternary structure, interacts with MGRN1, but does not undergo MGRN1-mediated ubiquitination; this interaction competes with GNAS-binding and thus inhibits agonist-induced cAMP production. Interacts with OPN3; the interaction results in a decrease in MC1R-mediated cAMP signaling and ultimately a decrease in melanin production in melanocytes.

The protein resides in the cell membrane. Functionally, receptor for MSH (alpha, beta and gamma) and ACTH. The activity of this receptor is mediated by G proteins which activate adenylate cyclase. Mediates melanogenesis, the production of eumelanin (black/brown) and phaeomelanin (red/yellow), via regulation of cAMP signaling in melanocytes. The polypeptide is Melanocyte-stimulating hormone receptor (MC1R) (Galago senegalensis (Northern lesser bushbaby)).